Reading from the N-terminus, the 438-residue chain is Xylose isomerase (438 aa).

Residues His-100 and Asp-103 contribute to the active site. 7 residues coordinate Mg(2+): Glu-231, Glu-267, His-270, Asp-295, Asp-306, Asp-308, and Asp-338.

The protein belongs to the xylose isomerase family. As to quaternary structure, homotetramer. The cofactor is Mg(2+).

Its subcellular location is the cytoplasm. The enzyme catalyses alpha-D-xylose = alpha-D-xylulofuranose. This chain is Xylose isomerase, found in Caldanaerobacter subterraneus subsp. yonseiensis (Thermoanaerobacter yonseiensis).